A 442-amino-acid polypeptide reads, in one-letter code: Protein translocase subunit SecY (442 aa).

10 helical membrane-spanning segments follow: residues 24–44 (FLFL…PGIN), 76–96 (IFAL…LMTA), 125–145 (VLAL…GVAF), 149–169 (FGFY…MMWL), 178–198 (VGNG…PRAI), 212–232 (IFAL…VVFI), 269–289 (VIPA…GSWF), 312–332 (NILL…ALMF), 363–383 (GVLT…CLLP), and 385–405 (FLVV…LIVV).

Belongs to the SecY/SEC61-alpha family. Component of the Sec protein translocase complex. Heterotrimer consisting of SecY, SecE and SecG subunits. The heterotrimers can form oligomers, although 1 heterotrimer is thought to be able to translocate proteins. Interacts with the ribosome. Interacts with SecDF, and other proteins may be involved. Interacts with SecA.

It is found in the cell inner membrane. In terms of biological role, the central subunit of the protein translocation channel SecYEG. Consists of two halves formed by TMs 1-5 and 6-10. These two domains form a lateral gate at the front which open onto the bilayer between TMs 2 and 7, and are clamped together by SecE at the back. The channel is closed by both a pore ring composed of hydrophobic SecY resides and a short helix (helix 2A) on the extracellular side of the membrane which forms a plug. The plug probably moves laterally to allow the channel to open. The ring and the pore may move independently. The protein is Protein translocase subunit SecY of Pseudomonas aeruginosa (strain ATCC 15692 / DSM 22644 / CIP 104116 / JCM 14847 / LMG 12228 / 1C / PRS 101 / PAO1).